Reading from the N-terminus, the 453-residue chain is MKLQHAKFHFVGVGGIGMCGLAELLHNIGAKVSGSDQAENANTERLKELGVKVFKGHASSNVGDADVVVYSSAIQYGNPEISEARARQIPLIPRAEALAEIMRLKRGIAVAGTHGKTTTTSMTSAIFLEANLSPTIVIGGRFELIKSTAMLGSGEWLVAEADESDGSFHKLSPEIAIITNIDSDHLEHFKTFENVQKSFHDFALKVPFYGKVIVCGDDPLVRQIFENFPKRILFYGFDEKNDLVVTGEHGHYAVHRNDRLLGTKHLVGEFDLKVPGRHNALNAVAAICAGVAAGIPFATCAKGLQRYEGVDRRFHFKGEKKGIKVYDDYGHHPTEVRAVLQAFREKYPKQRLVVFFQPHRYSRTQHCWHDFTTAFMEADQVLLTDIYPAGEAPIPGVTSEKLASEMKHEHAQYFVRDDKATQKILGMLKEGDVFVTLGAGDGWKLGLEVLNQL.

112–118 provides a ligand contact to ATP; it reads GTHGKTT.

Belongs to the MurCDEF family.

The protein resides in the cytoplasm. It carries out the reaction UDP-N-acetyl-alpha-D-muramate + L-alanine + ATP = UDP-N-acetyl-alpha-D-muramoyl-L-alanine + ADP + phosphate + H(+). It functions in the pathway cell wall biogenesis; peptidoglycan biosynthesis. Cell wall formation. This is UDP-N-acetylmuramate--L-alanine ligase from Bdellovibrio bacteriovorus (strain ATCC 15356 / DSM 50701 / NCIMB 9529 / HD100).